A 1110-amino-acid chain; its full sequence is Nitric oxide synthase 3 (1110 aa).

The disordered stretch occupies residues 1–74 (MGNFKSVGQE…PPEGPKFPRV (74 aa)). The segment covering 15 to 27 (CGLGLGLGLGLCG) has biased composition (gly residues). The span at 31 to 40 (PASPAPVSAS) shows a compositional bias: low complexity. A compositionally biased stretch (pro residues) spans 47 to 69 (SSPPLPLPAPEHSPPLTRPPEGP). Zn(2+) contacts are provided by Cys97 and Cys102. The interaction with NOSIP stretch occupies residues 101 to 489 (RCLGSLVFPR…PDPWKGSGTK (389 aa)). Position 105 (Ser105) interacts with (6R)-L-erythro-5,6,7,8-tetrahydrobiopterin. Ser117 is subject to Phosphoserine. Position 187 (Cys187) interacts with heme b. Residues Gln250, Trp359, Tyr360, and Glu364 each coordinate L-arginine. Arg368 lines the (6R)-L-erythro-5,6,7,8-tetrahydrobiopterin pocket. Asn369 is an L-arginine binding site. (6R)-L-erythro-5,6,7,8-tetrahydrobiopterin contacts are provided by Ala449, Trp450, and Phe463. Tyr478 contacts heme b. Thr498 is subject to Phosphothreonine. FMN-binding residues include Ser529, Glu530, Thr531, Arg533, Ser575, and Thr576. Residues Ser618, Ser636, and Ser641 each carry the phosphoserine modification. Residues Ser657, Cys664, Glu690, and Gln694 each contribute to the FMN site. Arg779 is an NADP(+) binding site. Residue His801 participates in FAD binding. Residues 821 to 848 (EDPPPPAESVAVEQLEKGSPGGPPPGWV) form a disordered region. Ser839 carries the phosphoserine modification. FAD is bound by residues Arg941, Tyr943, Ser944, Thr959, Ala961, Tyr965, Val978, Cys979, and Ser980. 5 residues coordinate NADP(+): Thr1019, Arg1052, Ser1081, Arg1082, and Lys1088.

It belongs to the NOS family. Homodimer. Interacts with NOSIP and NOSTRIN. Interacts with HSP90AB1. Forms a complex with ASL, ASS1 and SLC7A1; the complex regulates cell-autonomous L-arginine synthesis and citrulline recycling while channeling extracellular L-arginine to nitric oxide synthesis pathway. It depends on heme b as a cofactor. FAD serves as cofactor. FMN is required as a cofactor. The cofactor is (6R)-L-erythro-5,6,7,8-tetrahydrobiopterin.

The protein localises to the membrane. It is found in the caveola. Its subcellular location is the cytoplasm. The protein resides in the cytoskeleton. It localises to the golgi apparatus. The protein localises to the cell membrane. The enzyme catalyses 2 L-arginine + 3 NADPH + 4 O2 + H(+) = 2 L-citrulline + 2 nitric oxide + 3 NADP(+) + 4 H2O. Its activity is regulated as follows. Stimulated by calcium/calmodulin. Inhibited by NOSIP and NOSTRIN. In terms of biological role, produces nitric oxide (NO) which is implicated in vascular smooth muscle relaxation through a cGMP-mediated signal transduction pathway. NO mediates vascular endothelial growth factor (VEGF)-induced angiogenesis in coronary vessels and promotes blood clotting through the activation of platelets. In Cavia porcellus (Guinea pig), this protein is Nitric oxide synthase 3 (NOS3).